Reading from the N-terminus, the 384-residue chain is DNA dC-&gt;dU-editing enzyme APOBEC-3G (384 aa).

Positions 1–60 are essential for cytoplasmic localization; sequence MNPQFRNMVDGMDPHKFSYNFKNRPILSRRNTVWLCYEVKTKGPSRPPLDAKIFRGQVYF. CMP/dCMP-type deaminase domains follow at residues 29 to 138 and 214 to 328; these read RRNT…LRSL and GRHE…LRTL. Threonine 32 is modified (phosphothreonine; by PKA). Zn(2+) contacts are provided by histidine 65, cysteine 97, and cysteine 100. The necessary for homooligomerization stretch occupies residues 209-336; sequence EPCVEGRHET…TLDEAEAKIS (128 aa). Residues 213–215 are interaction with DNA; that stretch reads EGR. Threonine 218 bears the Phosphothreonine; by PKA and CAMK2 mark. Residue histidine 257 participates in Zn(2+) binding. Glutamate 259 functions as the Proton donor in the catalytic mechanism. Residues cysteine 288 and cysteine 291 each coordinate Zn(2+). Residues 313 to 320 form an interaction with DNA region; that stretch reads RIYDDQGR.

The protein belongs to the cytidine and deoxycytidylate deaminase family. In terms of assembly, homodimer. Zn(2+) is required as a cofactor.

It localises to the cytoplasm. The protein localises to the nucleus. Its subcellular location is the P-body. It carries out the reaction a 2'-deoxycytidine in single-stranded DNA + H2O + H(+) = a 2'-deoxyuridine in single-stranded DNA + NH4(+). In terms of biological role, DNA deaminase (cytidine deaminase) which acts as an inhibitor of retrovirus replication and retrotransposon mobility. After the penetration of retroviral nucleocapsids into target cells of infection and the initiation of reverse transcription, it can induce the conversion of cytosine to uracil in the minus-sense single-strand viral DNA, leading to G-to-A hypermutations in the subsequent plus-strand viral DNA. The resultant detrimental levels of mutations in the proviral genome, along with a deamination-independent mechanism that works prior to the proviral integration, together exert efficient antiretroviral effects in infected target cells. Selectively targets single-stranded DNA and does not deaminate double-stranded DNA or single- or double-stranded RNA. In Pongo pygmaeus (Bornean orangutan), this protein is DNA dC-&gt;dU-editing enzyme APOBEC-3G (APOBEC3G).